A 375-amino-acid polypeptide reads, in one-letter code: Heat shock protein 42 (375 aa).

4 disordered regions span residues 21–59, 81–127, 154–238, and 347–375; these read TGQR…HPLY, SPEY…YYHC, PYEG…ETRM, and PKPK…TVEN. The segment covering 22-48 has biased composition (low complexity); sequence GQRGQQGYPRQPQRPQRYHPHYGQVHV. Positions 49 to 58 are enriched in basic residues; the sequence is GGHHPRHHPL. Composition is skewed to acidic residues over residues 85–101 and 158–168; these read GYDD…EDMV and TEPEIEANTEQ. The span at 169 to 197 shows a compositional bias: basic and acidic residues; it reads EGEKGEEKDKKDKSEAPKEEAGETNKEKP. Phosphoserine is present on residues S182, S213, S214, S215, and S223. The sHSP domain maps to 237 to 356; that stretch reads RMDLPFSPEV…PKPKKRIAIE (120 aa). The segment covering 357–367 has biased composition (acidic residues); sequence EIPDEELEFEE.

Belongs to the small heat shock protein (HSP20) family. In terms of assembly, forms oligomeric complexes. Interacts with itself.

This Saccharomyces cerevisiae (strain ATCC 204508 / S288c) (Baker's yeast) protein is Heat shock protein 42 (HSP42).